We begin with the raw amino-acid sequence, 185 residues long: Ribosome-recycling factor (185 aa).

The protein belongs to the RRF family.

The protein resides in the cytoplasm. Functionally, responsible for the release of ribosomes from messenger RNA at the termination of protein biosynthesis. May increase the efficiency of translation by recycling ribosomes from one round of translation to another. This is Ribosome-recycling factor from Streptococcus pneumoniae (strain 70585).